Consider the following 62-residue polypeptide: Conorfamide-Tx1 (62 aa).

An N-terminal signal peptide occupies residues Met1–Ala19. A propeptide spanning residues Thr20–Lys26 is cleaved from the precursor. Tyr46 carries the post-translational modification Tyrosine amide. Residues Gly47–Phe62 constitute a propeptide that is removed on maturation.

This sequence belongs to the FARP (FMRFamide related peptide) family. As to expression, expressed by the venom duct.

It localises to the secreted. Functionally, this peptide does not show activity on human and mouse sensory neuron-specific G-protein coupled receptors MRGPRX1. This Conus textile (Cloth-of-gold cone) protein is Conorfamide-Tx1.